The following is a 160-amino-acid chain: UPF0758 protein YfjY (160 aa).

The MPN domain occupies 38–160 (AFTSTQAARD…IYSFAEHGLL (123 aa)). Residues histidine 109, histidine 111, and aspartate 122 each coordinate Zn(2+). The JAMM motif signature appears at 109–122 (HNHPSGDTTPSQAD).

This sequence belongs to the UPF0758 family.

In Escherichia coli (strain K12), this protein is UPF0758 protein YfjY (yfjY).